Here is a 239-residue protein sequence, read N- to C-terminus: MHTPFIVALDFPSKHDVQQFLRPFSGTPLFVKVGMELYYQEGPAIIAMFKEQGHAVFLDLKLHDIPNTVKQAMKGLARLGVDLVNVHAAGGRRMMEAAIEGLDAGTPSGAARPRCIAVTQLTSTDERMLHEELWISQPLEETVSHYAALAQASGMDGVVCSANEATLIKERCGASFLAVTPGIRFADDSVHDQVRVVTPRKARALGADYIVIGRSITRAADPLAAYSRLQHEWNGGETE.

Residues D10, K32, 59–68 (DLKLHDIPNT), T122, R184, Q193, G213, and R214 contribute to the substrate site. K61 acts as the Proton donor in catalysis.

It belongs to the OMP decarboxylase family. Type 1 subfamily. In terms of assembly, homodimer.

It catalyses the reaction orotidine 5'-phosphate + H(+) = UMP + CO2. Its pathway is pyrimidine metabolism; UMP biosynthesis via de novo pathway; UMP from orotate: step 2/2. Catalyzes the decarboxylation of orotidine 5'-monophosphate (OMP) to uridine 5'-monophosphate (UMP). This chain is Orotidine 5'-phosphate decarboxylase, found in Geobacillus thermodenitrificans (strain NG80-2).